We begin with the raw amino-acid sequence, 186 residues long: Ribosome-recycling factor (186 aa).

Belongs to the RRF family.

The protein localises to the cytoplasm. In terms of biological role, responsible for the release of ribosomes from messenger RNA at the termination of protein biosynthesis. May increase the efficiency of translation by recycling ribosomes from one round of translation to another. In Pelodictyon phaeoclathratiforme (strain DSM 5477 / BU-1), this protein is Ribosome-recycling factor.